The following is an 872-amino-acid chain: Alanine--tRNA ligase (872 aa).

Residues H567, H571, C669, and H673 each coordinate Zn(2+).

Belongs to the class-II aminoacyl-tRNA synthetase family. The cofactor is Zn(2+).

The protein localises to the cytoplasm. It carries out the reaction tRNA(Ala) + L-alanine + ATP = L-alanyl-tRNA(Ala) + AMP + diphosphate. Functionally, catalyzes the attachment of alanine to tRNA(Ala) in a two-step reaction: alanine is first activated by ATP to form Ala-AMP and then transferred to the acceptor end of tRNA(Ala). Also edits incorrectly charged Ser-tRNA(Ala) and Gly-tRNA(Ala) via its editing domain. This is Alanine--tRNA ligase from Streptococcus pyogenes serotype M5 (strain Manfredo).